The chain runs to 483 residues: PRAME family member 12 (483 aa).

An LRR 1; degenerate repeat occupies 97-122 (RWKLQVLDLRNVDENFWGIWSGASAL). The stretch at 177-201 (HVCCKELQIFGIAIHRIIEVLNTVE) is one LRR 2; degenerate repeat. An LRR 3; degenerate repeat occupies 202–228 (LDCIQEVEVCCPWELSILIRFAPYLGQ). One copy of the LRR 4; degenerate repeat lies at 229 to 264 (MRNLRKLVLFNIHVSACIPLDRKEQFVIQFTSQFLK). LRR repeat units lie at residues 265–290 (LDYF…LRCL), 291–322 (QAPL…RQLK), 323–341 (ELDL…PLSV), 347–374 (EATL…ALSR), and 375–399 (CSQL…LLRH).

It belongs to the PRAME family.

The protein is PRAME family member 12 of Homo sapiens (Human).